We begin with the raw amino-acid sequence, 355 residues long: MGCRQSSEEKEAARRSRRIDRHLRSESQRQRREIKLLLLGTSNSGKSTIVKQMKIIHSGGFNLEACKEYKPLIIYNAIDSLTRIIRALAALRIDFHNPDRAYDAVQLFALTGPAESKGEITPELLGVMRRLWADPGAQACFSRSSEYHLEDNAAYYLNDLERIAAADYIPTVEDILRSRDMTTGIVENKFTFKELTFKMVDVGGQRSERKKWIHCFEGVTAIIFCVELSGYDLKLYEDNQTSRMAESLRLFDSICNNNWFINTSLILFLNKKDLLAEKIRRIPLTICFPEYKGQNTYEEAAVYIQRQFEDLNRNKETKEIYSHFTCATDTSNIQFVFDAVTDVIIQNNLKYIGLC.

Positions 1–14 are enriched in basic and acidic residues; sequence MGCRQSSEEKEAAR. Positions 1–26 are disordered; sequence MGCRQSSEEKEAARRSRRIDRHLRSE. A lipid anchor (N-myristoyl glycine) is attached at glycine 2. The S-palmitoyl cysteine moiety is linked to residue cysteine 3. Positions 32–355 constitute a G-alpha domain; that stretch reads REIKLLLLGT…QNNLKYIGLC (324 aa). A G1 motif region spans residues 35–48; sequence KLLLLGTSNSGKST. Residues 40–47, 176–182, 201–205, 270–273, and alanine 327 contribute to the GTP site; these read GTSNSGKS, LRSRDMT, DVGGQ, and NKKD. Mg(2+) is bound at residue serine 47. Residues 174–182 are G2 motif; sequence DILRSRDMT. Arginine 179 carries the ADP-ribosylarginine; by cholera toxin modification. Position 182 (threonine 182) interacts with Mg(2+). Positions 197 to 206 are G3 motif; that stretch reads FKMVDVGGQR. The tract at residues 266-273 is G4 motif; the sequence is ILFLNKKD. Positions 325–330 are G5 motif; sequence TCATDT.

It belongs to the G-alpha family. G(i/o/t/z) subfamily. In terms of assembly, G-proteins are composed of 3 units; alpha, beta and gamma. The alpha chain contains the guanine nucleotide binding site. Interacts with ADGRB2.

The protein localises to the membrane. Functionally, guanine nucleotide-binding proteins (G proteins) are involved as modulators or transducers in various transmembrane signaling systems. This Homo sapiens (Human) protein is Guanine nucleotide-binding protein G(z) subunit alpha (GNAZ).